The chain runs to 223 residues: Small ribosomal subunit protein uS3 (223 aa).

A KH type-2 domain is found at Val-39 to Arg-107.

The protein belongs to the universal ribosomal protein uS3 family. Part of the 30S ribosomal subunit. Forms a tight complex with proteins S10 and S14.

Functionally, binds the lower part of the 30S subunit head. Binds mRNA in the 70S ribosome, positioning it for translation. This is Small ribosomal subunit protein uS3 from Nitrosococcus oceani (strain ATCC 19707 / BCRC 17464 / JCM 30415 / NCIMB 11848 / C-107).